Consider the following 343-residue polypeptide: Tetraacyldisaccharide 4'-kinase (343 aa).

65–72 (HAGGTGKT) contacts ATP.

This sequence belongs to the LpxK family.

The enzyme catalyses a lipid A disaccharide + ATP = a lipid IVA + ADP + H(+). It functions in the pathway glycolipid biosynthesis; lipid IV(A) biosynthesis; lipid IV(A) from (3R)-3-hydroxytetradecanoyl-[acyl-carrier-protein] and UDP-N-acetyl-alpha-D-glucosamine: step 6/6. Its function is as follows. Transfers the gamma-phosphate of ATP to the 4'-position of a tetraacyldisaccharide 1-phosphate intermediate (termed DS-1-P) to form tetraacyldisaccharide 1,4'-bis-phosphate (lipid IVA). This is Tetraacyldisaccharide 4'-kinase from Neisseria gonorrhoeae (strain ATCC 700825 / FA 1090).